The chain runs to 351 residues: Protein-glutamate methylesterase/protein-glutamine glutaminase 2 (351 aa).

The Response regulatory domain occupies 4–121 (KVLVVDDSAL…PQDFNEYQDL (118 aa)). Aspartate 55 bears the 4-aspartylphosphate mark. A CheB-type methylesterase domain is found at 156–348 (RVINTQLVAI…DKMLNYLASL (193 aa)). Residues serine 168, histidine 194, and aspartate 290 contribute to the active site.

The protein belongs to the CheB family. Phosphorylated by CheA. Phosphorylation of the N-terminal regulatory domain activates the methylesterase activity.

It is found in the cytoplasm. The catalysed reaction is [protein]-L-glutamate 5-O-methyl ester + H2O = L-glutamyl-[protein] + methanol + H(+). The enzyme catalyses L-glutaminyl-[protein] + H2O = L-glutamyl-[protein] + NH4(+). Involved in chemotaxis. Part of a chemotaxis signal transduction system that modulates chemotaxis in response to various stimuli. Catalyzes the demethylation of specific methylglutamate residues introduced into the chemoreceptors (methyl-accepting chemotaxis proteins or MCP) by CheR. Also mediates the irreversible deamidation of specific glutamine residues to glutamic acid. This chain is Protein-glutamate methylesterase/protein-glutamine glutaminase 2, found in Shewanella sp. (strain MR-7).